Consider the following 96-residue polypeptide: MKATMLLAVVVAVFVAGTEAHPHVCTSYYCSKFCGTAGCTRYGCRNLHRGKLCFCLHCSRVKFPFGATQDAKSMNELEYTPIMKSMENLDNGMDML.

The N-terminal stretch at 1–20 is a signal peptide; the sequence is MKATMLLAVVVAVFVAGTEA. Positions 61 to 96 are cleaved as a propeptide — removed in mature form; the sequence is VKFPFGATQDAKSMNELEYTPIMKSMENLDNGMDML.

Contains four disulfide bonds. As to expression, hemocytes.

The protein localises to the secreted. Its function is as follows. Bacteriolytic activity against Gram-positive bacteria M.luteus, B.megaterium and A.viridans and Gram-negative bacteria E.coli D31. Possesses antifungal activity against F.oxysporum. This chain is Myticin-B, found in Mytilus galloprovincialis (Mediterranean mussel).